Consider the following 148-residue polypeptide: Receptor activity-modifying protein 1 (148 aa).

An N-terminal signal peptide occupies residues 1–26; that stretch reads MAPGLRGLPRCGLWLLLAHHLFMVTA. 3 cysteine pairs are disulfide-bonded: Cys-27/Cys-82, Cys-40/Cys-72, and Cys-57/Cys-104. At 27 to 118 the chain is on the extracellular side; sequence CRDPDYGTLI…RALRDPPNSI (92 aa). Residues 119-140 traverse the membrane as a helical segment; the sequence is LCPFIALPITVTLLMTALVVWR. Topologically, residues 141–148 are cytoplasmic; sequence SKRTEGIV.

Belongs to the RAMP family. As to quaternary structure, heterodimer of CALCRL and RAMP1; the interaction induces allosteric modulation of CALCRL function and CGRP1/CALCA and CGRP2/CALCB ligand specificity. Heterodimer of CALCR and RAMP1; interaction forms the AMYR1 receptor complex for amylin/IAPP and CGRP1/CALCA ligands. As to expression, expressed predominantly in the thymus, skeletal muscle, embryonic and adult brain, embryonic and adult lung, and colon.

It localises to the cell membrane. Functionally, accessory protein that interacts with and modulates the function of G-protein coupled receptors including calcitonin gene-related peptide type 1 receptor (CALCRL) and calcitonin receptor (CALCR). Required for the transport of CALCRL to the plasma membrane. Together with CALCRL, form the receptor complex for the calcitonin gene-related peptides CGRP1/CALCA and CGRP2/CALCB. Together with CALCR, form the AMYR1 receptor complex for amylin/IAPP and CGRP1/CALCA. The sequence is that of Receptor activity-modifying protein 1 from Mus musculus (Mouse).